A 257-amino-acid polypeptide reads, in one-letter code: Glycerol-3-phosphate acyltransferase (257 aa).

Helical transmembrane passes span 7–27 (IVMA…LIGS), 66–86 (ILTL…TYII), 104–124 (AILV…PIFF), 140–160 (ITVD…ILLI), 164–184 (MSLS…VPGI), and 203–223 (YVIK…SLLI).

Belongs to the PlsY family. In terms of assembly, probably interacts with PlsX.

It is found in the cell membrane. The enzyme catalyses an acyl phosphate + sn-glycerol 3-phosphate = a 1-acyl-sn-glycero-3-phosphate + phosphate. The protein operates within lipid metabolism; phospholipid metabolism. Catalyzes the transfer of an acyl group from acyl-phosphate (acyl-PO(4)) to glycerol-3-phosphate (G3P) to form lysophosphatidic acid (LPA). This enzyme utilizes acyl-phosphate as fatty acyl donor, but not acyl-CoA or acyl-ACP. In Ureaplasma parvum serovar 3 (strain ATCC 700970), this protein is Glycerol-3-phosphate acyltransferase.